Reading from the N-terminus, the 39-residue chain is Photosystem II reaction center protein L (39 aa).

Residues 18 to 38 (SLYLGLLLVFVTGVLFSSYFF) traverse the membrane as a helical segment.

This sequence belongs to the PsbL family. As to quaternary structure, PSII is composed of 1 copy each of membrane proteins PsbA, PsbB, PsbC, PsbD, PsbE, PsbF, PsbH, PsbI, PsbJ, PsbK, PsbL, PsbM, PsbT, PsbX, PsbY, PsbZ, Psb30/Ycf12, at least 3 peripheral proteins of the oxygen-evolving complex and a large number of cofactors. It forms dimeric complexes.

It is found in the plastid. It localises to the organellar chromatophore thylakoid membrane. One of the components of the core complex of photosystem II (PSII). PSII is a light-driven water:plastoquinone oxidoreductase that uses light energy to abstract electrons from H(2)O, generating O(2) and a proton gradient subsequently used for ATP formation. It consists of a core antenna complex that captures photons, and an electron transfer chain that converts photonic excitation into a charge separation. This subunit is found at the monomer-monomer interface and is required for correct PSII assembly and/or dimerization. This Paulinella chromatophora protein is Photosystem II reaction center protein L.